The sequence spans 240 residues: Manganese transport system ATP-binding protein MntB (240 aa).

The region spanning 1-233 (MEIQGLTIAY…KIQFAYGDAP (233 aa)) is the ABC transporter domain. An ATP-binding site is contributed by 33 to 40 (GPNGAGKS).

The protein belongs to the ABC transporter superfamily.

The protein resides in the cell membrane. Functionally, this protein is probably a component of a manganese permease, a binding protein-dependent, ATP-driven transport system. Probably responsible for energy coupling to the transport system. In Listeria monocytogenes serovar 1/2a (strain ATCC BAA-679 / EGD-e), this protein is Manganese transport system ATP-binding protein MntB (mntB).